Consider the following 658-residue polypeptide: Pentatricopeptide repeat-containing protein At1g69290 (658 aa).

2 disordered regions span residues 1 to 23 (MFRK…ESPS) and 39 to 61 (TLSP…KSSF). Polar residues predominate over residues 50–61 (PKTLTPDQKSSF). PPR repeat units follow at residues 214–249 (DLVA…GVKP), 250–284 (DELS…GFAS), 285–320 (RRIL…GEES), 323–353 (SVET…AQKL), 361–395 (DSSV…GGGS), 397–431 (GIGV…GLQL), 432–466 (DVEI…RVVD), 467–497 (LKGS…VVED), 503–537 (NSHD…RYEP), 538–568 (NNQT…IKGK), and 581–615 (DHAL…KIFV).

Belongs to the PPR family. P subfamily.

This is Pentatricopeptide repeat-containing protein At1g69290 from Arabidopsis thaliana (Mouse-ear cress).